Here is a 298-residue protein sequence, read N- to C-terminus: 5,10-methylenetetrahydrofolate reductase (298 aa).

E28 acts as the Proton donor/acceptor in catalysis. An NADH-binding site is contributed by T59. The FAD site is built by Y60, A62, H88, R118, G119, D120, A132, Y152, H156, A159, D165, N168, and K172. D120 provides a ligand contact to (6S)-5-methyl-5,6,7,8-tetrahydrofolate. Q183 lines the NADH pocket. Residues Q183, Q219, and R279 each coordinate (6S)-5-methyl-5,6,7,8-tetrahydrofolate.

It belongs to the methylenetetrahydrofolate reductase family. FAD is required as a cofactor.

It catalyses the reaction (6S)-5-methyl-5,6,7,8-tetrahydrofolate + NAD(+) = (6R)-5,10-methylene-5,6,7,8-tetrahydrofolate + NADH + H(+). The protein operates within one-carbon metabolism; tetrahydrofolate interconversion. It participates in amino-acid biosynthesis; L-methionine biosynthesis via de novo pathway. Functionally, catalyzes the NADH-dependent reduction of 5,10-methylenetetrahydrofolate to 5-methyltetrahydrofolate. Is required to provide the methyl group necessary for methionine synthetase to convert homocysteine to methionine; the methyl group is given by 5-methyltetrahydrofolate. The protein is 5,10-methylenetetrahydrofolate reductase (metF) of Pectobacterium carotovorum subsp. carotovorum (Erwinia carotovora subsp. carotovora).